The primary structure comprises 165 residues: Pyruvoyl-dependent arginine decarboxylase (165 aa).

At Ser53 the chain carries Pyruvic acid (Ser).

It belongs to the PdaD family. In terms of assembly, trimer of an alpha-beta dimer. Pyruvate serves as cofactor.

It catalyses the reaction L-arginine + H(+) = agmatine + CO2. The protein is Pyruvoyl-dependent arginine decarboxylase (pdaD) of Methanocaldococcus jannaschii (strain ATCC 43067 / DSM 2661 / JAL-1 / JCM 10045 / NBRC 100440) (Methanococcus jannaschii).